A 471-amino-acid polypeptide reads, in one-letter code: Venom prothrombin activator vestarin-D2 (471 aa).

The signal sequence occupies residues 1–20; sequence MAPQLLLCLILTFLWSLPEA. Residues 21 to 40 constitute a propeptide that is removed on maturation; that stretch reads ESNVFLKSNVANRFLQRTKR. In terms of domain architecture, Gla spans 41 to 86; that stretch reads ANSIFEEIRPGNIERECVEEKCSKEEAREVFQDNEKTEAFWTVYVD. Glutamate 46, glutamate 47, glutamate 54, glutamate 56, glutamate 59, glutamate 60, glutamate 65, glutamate 66, glutamate 69, and glutamate 75 each carry 4-carboxyglutamate. A disulfide bridge connects residues cysteine 57 and cysteine 62. The 37-residue stretch at 86 to 122 folds into the EGF-like 1; calcium-binding domain; that stretch reads DGDQCLSNPCHYRGTCKDGIGSYTCTCLPGYEGKNCE. 10 disulfides stabilise this stretch: cysteine 90-cysteine 101, cysteine 95-cysteine 110, cysteine 112-cysteine 121, cysteine 129-cysteine 140, cysteine 136-cysteine 149, cysteine 151-cysteine 164, cysteine 172-cysteine 333, cysteine 233-cysteine 238, cysteine 381-cysteine 395, and cysteine 406-cysteine 434. Serine 92 carries an O-linked (Hex...) serine glycan. An EGF-like 2 domain is found at 129-164; that stretch reads CRLFNGNCWHFCKTVQNDTQCSCAEGYRLGVDGFSC. A propeptide spans 182-226 (activation peptide); it reads REASLPDFHFSDDYDAIDENNLVETVQSQSATLLKKSDNPSPDIR. The 232-residue stretch at 227–458 folds into the Peptidase S1 domain; sequence IVSGLDCKLG…FIPWIKTIMR (232 aa). Catalysis depends on histidine 268, which acts as the Charge relay system. Residue asparagine 271 is glycosylated (N-linked (GlcNAc...) asparagine). The active-site Charge relay system is aspartate 313. Serine 410 serves as the catalytic Charge relay system.

Belongs to the peptidase S1 family. Snake venom subfamily. Heterodimer of a light chain and a heavy chain; disulfide-linked. In terms of processing, the vitamin K-dependent, enzymatic carboxylation of some glutamate residues allows the modified protein to bind calcium. In terms of tissue distribution, expressed by the venom gland.

The protein resides in the secreted. The catalysed reaction is Selective cleavage of Arg-|-Thr and then Arg-|-Ile bonds in prothrombin to form thrombin.. Its function is as follows. Snake prothrombin activator that attacks the hemostatic system of prey. This protein is functionally similar to blood coagulation factor Xa. This is Venom prothrombin activator vestarin-D2 from Demansia vestigiata (Lesser black whip snake).